A 259-amino-acid polypeptide reads, in one-letter code: NAD kinase (259 aa).

Catalysis depends on D43, which acts as the Proton acceptor. Residues 43-44, 111-112, and R136 contribute to the NAD(+) site; these read DG and NE.

It belongs to the NAD kinase family. It depends on a divalent metal cation as a cofactor.

It is found in the cytoplasm. It catalyses the reaction NAD(+) + ATP = ADP + NADP(+) + H(+). In terms of biological role, involved in the regulation of the intracellular balance of NAD and NADP, and is a key enzyme in the biosynthesis of NADP. Catalyzes specifically the phosphorylation on 2'-hydroxyl of the adenosine moiety of NAD to yield NADP. This chain is NAD kinase, found in Mycoplasma pneumoniae (strain ATCC 29342 / M129 / Subtype 1) (Mycoplasmoides pneumoniae).